A 142-amino-acid chain; its full sequence is Transcriptional regulator MraZ (142 aa).

SpoVT-AbrB domains are found at residues 5–48 (EFEY…PLCE) and 77–120 (AFDV…DKET).

It belongs to the MraZ family. Forms oligomers.

It is found in the cytoplasm. The protein localises to the nucleoid. This is Transcriptional regulator MraZ from Dehalococcoides mccartyi (strain ATCC BAA-2100 / JCM 16839 / KCTC 5957 / BAV1).